The following is a 795-amino-acid chain: Phenylalanine--tRNA ligase beta subunit (795 aa).

The tRNA-binding domain occupies alanine 39–arginine 148. A B5 domain is found at proline 401–asparagine 476. The Mg(2+) site is built by aspartate 454, aspartate 460, glutamate 463, and glutamate 464. The FDX-ACB domain maps to serine 701–arginine 794.

It belongs to the phenylalanyl-tRNA synthetase beta subunit family. Type 1 subfamily. Tetramer of two alpha and two beta subunits. Mg(2+) is required as a cofactor.

The protein localises to the cytoplasm. It carries out the reaction tRNA(Phe) + L-phenylalanine + ATP = L-phenylalanyl-tRNA(Phe) + AMP + diphosphate + H(+). This chain is Phenylalanine--tRNA ligase beta subunit, found in Pseudoalteromonas translucida (strain TAC 125).